Consider the following 630-residue polypeptide: Chaperone protein HtpG (630 aa).

Residues 1-327 are a; substrate-binding; the sequence is MSVETYKFDA…SEDLSLNISR (327 aa). The b stretch occupies residues 328–551; it reads ETLQHSPLID…EGSMDIRTER (224 aa). A compositionally biased stretch (basic and acidic residues) spans 483–499; that stretch reads TKTAKSSDTNNDGKDDT. Positions 483–504 are disordered; sequence TKTAKSSDTNNDGKDDTSSSDD. Positions 552 to 630 are c; the sequence is FLIEQKQLSS…INFFIEKSVN (79 aa).

Belongs to the heat shock protein 90 family. As to quaternary structure, homodimer.

The protein localises to the cytoplasm. In terms of biological role, molecular chaperone. Has ATPase activity. This Orientia tsutsugamushi (strain Boryong) (Rickettsia tsutsugamushi) protein is Chaperone protein HtpG.